Reading from the N-terminus, the 71-residue chain is Large ribosomal subunit protein bL31 (71 aa).

Residues cysteine 16, cysteine 18, cysteine 37, and cysteine 40 each contribute to the Zn(2+) site.

This sequence belongs to the bacterial ribosomal protein bL31 family. Type A subfamily. Part of the 50S ribosomal subunit. Zn(2+) is required as a cofactor.

In terms of biological role, binds the 23S rRNA. The protein is Large ribosomal subunit protein bL31 of Sodalis glossinidius (strain morsitans).